The following is a 349-amino-acid chain: Fe(3+) ions import ATP-binding protein FbpC (349 aa).

The ABC transporter domain occupies 4 to 236; that stretch reads LELHHIGKSY…PVDEPTATFL (233 aa). Position 36-43 (36-43) interacts with ATP; it reads GPSGSGKT.

It belongs to the ABC transporter superfamily. Fe(3+) ion importer (TC 3.A.1.10) family. In terms of assembly, the complex is composed of two ATP-binding proteins (FbpC), two transmembrane proteins (FbpB) and a solute-binding protein (FbpA).

The protein localises to the cell inner membrane. The catalysed reaction is Fe(3+)(out) + ATP + H2O = Fe(3+)(in) + ADP + phosphate + H(+). Its function is as follows. Part of the ABC transporter complex FbpABC involved in Fe(3+) ions import. Responsible for energy coupling to the transport system. This Yersinia pseudotuberculosis serotype I (strain IP32953) protein is Fe(3+) ions import ATP-binding protein FbpC.